The following is a 500-amino-acid chain: Enolase (500 aa).

Residues His225 and Glu234 each coordinate substrate. The Proton donor role is filled by Glu277. Asp312, Glu361, and Asp386 together coordinate Mg(2+). Substrate-binding residues include Glu361 and Asp386. Lys411 functions as the Proton acceptor in the catalytic mechanism. Residues 438-441 (SHRS) and Lys462 each bind substrate.

It belongs to the enolase family. Homodimer. Mg(2+) serves as cofactor.

The protein resides in the cytoplasm. It catalyses the reaction (2R)-2-phosphoglycerate = phosphoenolpyruvate + H2O. It participates in carbohydrate degradation; glycolysis; pyruvate from D-glyceraldehyde 3-phosphate: step 4/5. In terms of biological role, enzyme of the glycolytic pathway. Glycolysis is essential in glial cells but not in neurons; neurons rely on the citric acid cycle for their energy needs, and on lactate and alanine secreted into the hemolymph by glial cells to fuel it. This is Enolase from Drosophila melanogaster (Fruit fly).